Reading from the N-terminus, the 198-residue chain is Transcription factor BHLH133 (198 aa).

The tract at residues 114–127 (SAESSQSYYAKNRR) is basic motif; degenerate. Positions 114–163 (SAESSQSYYAKNRRQRINERLRILQELIPNGTKVDISTMLEEAIQYVKFL) constitute a bHLH domain. A helix-loop-helix motif region spans residues 128-163 (QRINERLRILQELIPNGTKVDISTMLEEAIQYVKFL).

The protein belongs to the bHLH protein family.

It is found in the nucleus. In terms of biological role, transcription factor that acts as a regulator of iron homeostasis. May act as negative regulator of iron transportation from root to shoot. Does not seem to be involved in the suppression of the induction of iron deficiency responsive genes. This is Transcription factor BHLH133 from Oryza sativa subsp. japonica (Rice).